A 334-amino-acid chain; its full sequence is Ornithine carbamoyltransferase (334 aa).

Carbamoyl phosphate-binding positions include 57–60 (STRT), glutamine 84, arginine 108, and 135–138 (HPTQ). L-ornithine-binding positions include asparagine 168, aspartate 233, and 237-238 (SM). Carbamoyl phosphate is bound by residues 275–276 (CL) and arginine 320.

It belongs to the aspartate/ornithine carbamoyltransferase superfamily. OTCase family.

The protein localises to the cytoplasm. The enzyme catalyses carbamoyl phosphate + L-ornithine = L-citrulline + phosphate + H(+). It participates in amino-acid biosynthesis; L-arginine biosynthesis; L-arginine from L-ornithine and carbamoyl phosphate: step 1/3. In terms of biological role, reversibly catalyzes the transfer of the carbamoyl group from carbamoyl phosphate (CP) to the N(epsilon) atom of ornithine (ORN) to produce L-citrulline. This Thermobifida fusca (strain YX) protein is Ornithine carbamoyltransferase.